Consider the following 163-residue polypeptide: Shikimate kinase (163 aa).

Residue 10 to 15 (GVGKTT) participates in ATP binding. T14 is a Mg(2+) binding site. Substrate-binding residues include D28, R52, and G75. ATP is bound at residue R116. Residue R134 participates in substrate binding. R151 is a binding site for ATP.

Belongs to the shikimate kinase family. Monomer. It depends on Mg(2+) as a cofactor.

It is found in the cytoplasm. The enzyme catalyses shikimate + ATP = 3-phosphoshikimate + ADP + H(+). It participates in metabolic intermediate biosynthesis; chorismate biosynthesis; chorismate from D-erythrose 4-phosphate and phosphoenolpyruvate: step 5/7. In terms of biological role, catalyzes the specific phosphorylation of the 3-hydroxyl group of shikimic acid using ATP as a cosubstrate. This Streptococcus pyogenes serotype M12 (strain MGAS2096) protein is Shikimate kinase.